The sequence spans 408 residues: Acetate kinase (408 aa).

Asparagine 7 provides a ligand contact to Mg(2+). Position 14 (lysine 14) interacts with ATP. Arginine 91 serves as a coordination point for substrate. The active-site Proton donor/acceptor is aspartate 148. Residues 208–212 (HLGNG), 283–285 (DFR), and 331–335 (GIGEN) contribute to the ATP site. Residue glutamate 384 participates in Mg(2+) binding.

This sequence belongs to the acetokinase family. Homodimer. Mg(2+) serves as cofactor. Mn(2+) is required as a cofactor.

It localises to the cytoplasm. It catalyses the reaction acetate + ATP = acetyl phosphate + ADP. It participates in metabolic intermediate biosynthesis; acetyl-CoA biosynthesis; acetyl-CoA from acetate: step 1/2. In terms of biological role, catalyzes the formation of acetyl phosphate from acetate and ATP. Can also catalyze the reverse reaction. The chain is Acetate kinase from Methanosarcina acetivorans (strain ATCC 35395 / DSM 2834 / JCM 12185 / C2A).